The chain runs to 470 residues: Serine hydroxymethyltransferase 5 (470 aa).

Lys244 carries the N6-(pyridoxal phosphate)lysine modification.

The protein belongs to the SHMT family. In terms of assembly, homotetramer. It depends on pyridoxal 5'-phosphate as a cofactor.

It localises to the cytoplasm. It carries out the reaction (6R)-5,10-methylene-5,6,7,8-tetrahydrofolate + glycine + H2O = (6S)-5,6,7,8-tetrahydrofolate + L-serine. It functions in the pathway one-carbon metabolism; tetrahydrofolate interconversion. Its function is as follows. Catalyzes the interconversion of serine and glycine. This chain is Serine hydroxymethyltransferase 5 (SHM5), found in Arabidopsis thaliana (Mouse-ear cress).